The following is a 650-amino-acid chain: 1-deoxy-D-xylulose-5-phosphate synthase (650 aa).

Residues H73 and 113 to 115 (SHA) each bind thiamine diphosphate. D145 is a binding site for Mg(2+). Thiamine diphosphate-binding positions include 146–147 (GA), N175, Y287, and E369. N175 serves as a coordination point for Mg(2+). Positions 629-650 (SARPLPEDAERVPMRAEDDEQA) are disordered. The span at 633 to 644 (LPEDAERVPMRA) shows a compositional bias: basic and acidic residues.

It belongs to the transketolase family. DXPS subfamily. Homodimer. It depends on Mg(2+) as a cofactor. The cofactor is thiamine diphosphate.

The catalysed reaction is D-glyceraldehyde 3-phosphate + pyruvate + H(+) = 1-deoxy-D-xylulose 5-phosphate + CO2. It functions in the pathway metabolic intermediate biosynthesis; 1-deoxy-D-xylulose 5-phosphate biosynthesis; 1-deoxy-D-xylulose 5-phosphate from D-glyceraldehyde 3-phosphate and pyruvate: step 1/1. Functionally, catalyzes the acyloin condensation reaction between C atoms 2 and 3 of pyruvate and glyceraldehyde 3-phosphate to yield 1-deoxy-D-xylulose-5-phosphate (DXP). This Clavibacter sepedonicus (Clavibacter michiganensis subsp. sepedonicus) protein is 1-deoxy-D-xylulose-5-phosphate synthase.